The primary structure comprises 586 residues: CTP synthase (586 aa).

Residues 1–278 form an amidoligase domain region; the sequence is MRKHPQTATK…DAFVVRRLNL (278 aa). Ser20 is a CTP binding site. Residue Ser20 participates in UTP binding. Residues 21–26 and Asp78 each bind ATP; that span reads SLGKGL. Mg(2+) is bound by residues Asp78 and Glu152. CTP-binding positions include 159–161, 199–204, and Lys235; these read DIE and KTKPTQ. UTP is bound by residues 199–204 and Lys235; that span reads KTKPTQ. Residues 303-551 enclose the Glutamine amidotransferase type-1 domain; the sequence is RIALVGKYVE…VGAAIDYKAG (249 aa). Position 366 (Gly366) interacts with L-glutamine. Cys393 acts as the Nucleophile; for glutamine hydrolysis in catalysis. L-glutamine contacts are provided by residues 394-397, Glu416, and Arg477; that span reads LGLQ. Active-site residues include His524 and Glu526. Residues 560 to 586 are disordered; the sequence is EIPEHTPNGSSHRDGVGQPLPEPASRG.

It belongs to the CTP synthase family. In terms of assembly, homotetramer.

The catalysed reaction is UTP + L-glutamine + ATP + H2O = CTP + L-glutamate + ADP + phosphate + 2 H(+). It carries out the reaction L-glutamine + H2O = L-glutamate + NH4(+). It catalyses the reaction UTP + NH4(+) + ATP = CTP + ADP + phosphate + 2 H(+). The protein operates within pyrimidine metabolism; CTP biosynthesis via de novo pathway; CTP from UDP: step 2/2. Allosterically activated by GTP, when glutamine is the substrate; GTP has no effect on the reaction when ammonia is the substrate. The allosteric effector GTP functions by stabilizing the protein conformation that binds the tetrahedral intermediate(s) formed during glutamine hydrolysis. Inhibited by the product CTP, via allosteric rather than competitive inhibition. Its function is as follows. Catalyzes the ATP-dependent amination of UTP to CTP with either L-glutamine or ammonia as the source of nitrogen. Regulates intracellular CTP levels through interactions with the four ribonucleotide triphosphates. This is CTP synthase from Mycobacterium tuberculosis (strain ATCC 25177 / H37Ra).